The following is a 247-amino-acid chain: Cytochrome c oxidase subunit 2 (247 aa).

Residues methionine 1 to asparagine 11 form the signal peptide. Over aspartate 12 to asparagine 38 the chain is Mitochondrial intermembrane. Residues isoleucine 39–lysine 59 traverse the membrane as a helical segment. The Mitochondrial matrix segment spans residues aspartate 60–glutamate 78. The chain crosses the membrane as a helical span at residues isoleucine 79–tyrosine 101. At leucine 102–glutamine 247 the chain is on the mitochondrial intermembrane side. Cu cation contacts are provided by histidine 182, cysteine 217, glutamate 219, cysteine 221, histidine 225, and methionine 228. Position 219 (glutamate 219) interacts with Mg(2+).

This sequence belongs to the cytochrome c oxidase subunit 2 family. In terms of assembly, component of the cytochrome c oxidase (complex IV, CIV), a multisubunit enzyme composed of a catalytic core of 3 subunits and several supernumerary subunits. The complex exists as a monomer or a dimer and forms supercomplexes (SCs) in the inner mitochondrial membrane with ubiquinol-cytochrome c oxidoreductase (cytochrome b-c1 complex, complex III, CIII). Cu cation serves as cofactor. In terms of processing, the signal sequence of COX2 is processed by IMP1.

It is found in the mitochondrion inner membrane. It carries out the reaction 4 Fe(II)-[cytochrome c] + O2 + 8 H(+)(in) = 4 Fe(III)-[cytochrome c] + 2 H2O + 4 H(+)(out). Functionally, component of the cytochrome c oxidase, the last enzyme in the mitochondrial electron transport chain which drives oxidative phosphorylation. The respiratory chain contains 3 multisubunit complexes succinate dehydrogenase (complex II, CII), ubiquinol-cytochrome c oxidoreductase (cytochrome b-c1 complex, complex III, CIII) and cytochrome c oxidase (complex IV, CIV), that cooperate to transfer electrons derived from NADH and succinate to molecular oxygen, creating an electrochemical gradient over the inner membrane that drives transmembrane transport and the ATP synthase. Cytochrome c oxidase is the component of the respiratory chain that catalyzes the reduction of oxygen to water. Electrons originating from reduced cytochrome c in the intermembrane space (IMS) are transferred via the dinuclear copper A center (CU(A)) of subunit 2 and heme A of subunit 1 to the active site in subunit 1, a binuclear center (BNC) formed by heme A3 and copper B (CU(B)). The BNC reduces molecular oxygen to 2 water molecules using 4 electrons from cytochrome c in the IMS and 4 protons from the mitochondrial matrix. In Wickerhamomyces canadensis (Yeast), this protein is Cytochrome c oxidase subunit 2 (COX2).